The primary structure comprises 523 residues: GMP synthase [glutamine-hydrolyzing] (523 aa).

Residues 8-205 (KILILDFGSQ…VVDICGCETN (198 aa)) form the Glutamine amidotransferase type-1 domain. The active-site Nucleophile is the Cys-85. Catalysis depends on residues His-179 and Glu-181. The region spanning 206–398 (WTAENIIEDA…LGLPAEMLNR (193 aa)) is the GMPS ATP-PPase domain. Position 233 to 239 (233 to 239 (SGGVDSS)) interacts with ATP.

As to quaternary structure, homodimer.

The catalysed reaction is XMP + L-glutamine + ATP + H2O = GMP + L-glutamate + AMP + diphosphate + 2 H(+). It participates in purine metabolism; GMP biosynthesis; GMP from XMP (L-Gln route): step 1/1. Functionally, catalyzes the synthesis of GMP from XMP. In Histophilus somni (strain 2336) (Haemophilus somnus), this protein is GMP synthase [glutamine-hydrolyzing].